Reading from the N-terminus, the 1479-residue chain is MPEEQPQQQQQPVREQPSNPDDVPWKKVWTINEMRDSAKDWNLSSDAGLLNYMQDFANKLIYKTKELEFQVDELVKDSKSIHVKVHNTFDQFLMLSNTQFIENRVYEDNSELNNEQNEQTDKPQQQEITEEILIPKFSKAILIGLEALEKANFVNAALEISEQSNSNNNNNDYQQQMNGSIAASSAEGGLVEGGEQAGTDAQPSANTEKKKEKLDHYLRYPLPHIIGSQQFHQDDFCGLFIEDSDSDSSDEEDEEDVDAEDGSDESSSESSSDDDDEKDEQQQSTLFLTDEQPKQQNFFFQDEDATSENNANKKVSESLFEDEDDIFGDKPVASKKSSNSYTSSLSDILGGDDEDDLFGGSKKKQQQQEDADGDEPTKKKDPFADELNNTLSSKNKGGDDDLFGGSSSTTTTSKPKKKSMFDDDLFGDSEETPAPKSSASRKVTFDDSLFGDDETALPTSKKDSTTTSSQPQQKKTLNDLFTDEDLTPATKKETKKSSSLSFLDGMDEDDLFGTPKPKSTTTSAAPTATTTKPPTPIPDSDASGSESTTGKSSPAPKKPVGGVKLFDFDAAGGDIFSGKKVGTGGKSSPSPAPKTESKASEDDFFSSDKKSTSATKKDAEIFGSEGGLLDVPEKKIKRHDPKKYVDSDVLGIDSISSDKNKPKVQDPFGVGAAGSNDDDSFDIPKANSKKEQETKPTKSTTTDDDLDIPKAPTTATTTTTTKPAVKKSTKSNFFDFEDTDSPLSSNKKSGGDDDLFSFDSSKTTTETKKQPITEEPKKKQDTTTTPSIDPFSGLDIKKPSEASISPASPVSTIESDPLFGDIKKPVAQKPKKTNFFDGDLTKDEPAKSEPTKVEPTKVEPTKAEPTKVEPAKVEPTKVESDKKESNPLGGGDEESVFGDFSIKKNPTTSSSTTATENKPAVKKSTKSNFFDFEDTDSPLSSNKKNDDDIFSSTTKKSTTTTTTTTSSKDFFGDLDTSSGNKKVEEKKSSDFDSFFSGSDDPLGITKPKSKTTTTPPLTSTTANIESDDPLSLGLPTFTNNNNNNNAKPPPPPSPLGEDVPSPLTSNNTKNRTKSIGSMFEAQQQLQQQQQEKNRSESPTSEKAEPTKKTSNISSLQNKLSLNPNMFLPGSKMPKKKKEESENEDDSSTNNDNDSSATDLSDSGRSSPSVTSPTLSGGRPRRNTVSSRNNNDSEESEPVKELTHATASRPKSGGRRPPTRKSGTSAPNRSESPTPTQKSDSESEKVRSSSPITTKPVVSEPTKKTISNTSFFDDIPSEKTSSGKSSPSPTIKSTSEKVTIDPLGDIFASTTTKPTASETKAALSSAPKKSEPETPKETPKETPKEKEQTKEKEQPKETPKTTTTKKSTKAVETKSETDSFFDDIPDIISRPKASVKSAAAKKASSTTKPVISDDIFDDITSTTSKSTTTTTTTTTTKAKSTKAVDNLFDDDTNTTTKATPTKATPSKSKPKAKNVENLFD.

The segment covering 1-17 has biased composition (low complexity); the sequence is MPEEQPQQQQQPVREQP. Disordered regions lie at residues 1–25, 188–210, 240–564, 576–1383, and 1419–1479; these read MPEE…DVPW, GGLV…TEKK, FIED…GGVK, FSGK…FDDI, and TSTT…NLFD. The segment covering 242–279 has biased composition (acidic residues); it reads EDSDSDSSDEEDEEDVDAEDGSDESSSESSSDDDDEKD. Residues 334–349 are compositionally biased toward low complexity; sequence SKKSSNSYTSSLSDIL. Positions 422–431 are enriched in acidic residues; sequence DDDLFGDSEE. Composition is skewed to low complexity over residues 465-475 and 514-532; these read TTTSSQPQQKK and TPKP…TTTK. T535 is subject to Phosphothreonine. A compositionally biased stretch (polar residues) spans 542–552; it reads ASGSESTTGKS. Positions 595 to 620 are enriched in basic and acidic residues; that stretch reads TESKASEDDFFSSDKKSTSATKKDAE. Residues 709–723 show a composition bias toward low complexity; the sequence is PKAPTTATTTTTTKP. A compositionally biased stretch (basic and acidic residues) spans 765-781; the sequence is TETKKQPITEEPKKKQD. Over residues 802 to 814 the composition is skewed to polar residues; the sequence is ASISPASPVSTIE. A compositionally biased stretch (basic and acidic residues) spans 839-885; it reads DLTKDEPAKSEPTKVEPTKVEPTKAEPTKVEPAKVEPTKVESDKKES. A compositionally biased stretch (polar residues) spans 904 to 916; it reads KNPTTSSSTTATE. The span at 951 to 968 shows a compositional bias: low complexity; that stretch reads SSTTKKSTTTTTTTTSSK. Over residues 981–990 the composition is skewed to basic and acidic residues; the sequence is KKVEEKKSSD. 2 stretches are compositionally biased toward low complexity: residues 991-1000 and 1010-1021; these read FDSFFSGSDD and KTTTTPPLTSTT. Residues 1062-1075 show a composition bias toward polar residues; the sequence is PLTSNNTKNRTKSI. The span at 1091–1107 shows a compositional bias: basic and acidic residues; it reads EKNRSESPTSEKAEPTK. Positions 1108–1123 are enriched in polar residues; sequence KTSNISSLQNKLSLNP. Over residues 1147 to 1162 the composition is skewed to low complexity; sequence STNNDNDSSATDLSDS. Composition is skewed to polar residues over residues 1163 to 1174 and 1220 to 1236; these read GRSSPSVTSPTL and KSGT…TPTQ. Phosphoserine is present on S1249. Residues 1277-1292 are compositionally biased toward low complexity; it reads EKTSSGKSSPSPTIKS. Residues 1307–1317 show a composition bias toward polar residues; sequence ASTTTKPTASE. The segment covering 1327-1358 has biased composition (basic and acidic residues); the sequence is KKSEPETPKETPKETPKEKEQTKEKEQPKETP. Low complexity-rich tracts occupy residues 1419–1445 and 1452–1466; these read TSTT…AVDN and NTTT…TPSK.

The protein belongs to the FAM21 family. Probable component of the WASH complex.

The chain is WASH complex subunit 2 from Dictyostelium discoideum (Social amoeba).